The chain runs to 306 residues: Lymphotoxin-beta (306 aa).

The Cytoplasmic portion of the chain corresponds to 1–27; sequence MGTRGLQGLGGRPQGRGCLLLAVAGAT. The helical; Signal-anchor for type II membrane protein transmembrane segment at 28–48 threads the bilayer; it reads SLVTLLLAVPITVLAVLALVP. At 49-306 the chain is on the extracellular side; it reads QDQGRRVEKI…KTFFGAVMVG (258 aa). Disordered stretches follow at residues 63-112 and 127-151; these read AQAQ…GPVA and PAADSTPDPGVQQLPKGEPETDLNP. Residues 74–85 show a composition bias toward low complexity; sequence PSCILPSPSSLS. A compositionally biased stretch (polar residues) spans 95–112; the sequence is QRSNASRNLASTSQGPVA. N-linked (GlcNAc...) asparagine glycosylation is present at Asn98. The 152-residue stretch at 154 to 305 folds into the THD domain; that stretch reads PAAHLIGAWM…GKTFFGAVMV (152 aa). Residue Asn284 is glycosylated (N-linked (GlcNAc...) asparagine).

This sequence belongs to the tumor necrosis factor family. Heterotrimer of either two LTB and one LTA subunits or (less prevalent) two LTA and one LTB subunits.

It localises to the membrane. In terms of biological role, cytokine that binds to LTBR/TNFRSF3. May play a specific role in immune response regulation. Provides the membrane anchor for the attachment of the heterotrimeric complex to the cell surface. The protein is Lymphotoxin-beta (Ltb) of Mus musculus (Mouse).